Here is a 181-residue protein sequence, read N- to C-terminus: Oligoribonuclease (181 aa).

Positions 8–171 (LVWLDMEMTG…ADIYESIDEL (164 aa)) constitute an Exonuclease domain. The active site involves Tyr-129.

This sequence belongs to the oligoribonuclease family.

The protein resides in the cytoplasm. Its function is as follows. 3'-to-5' exoribonuclease specific for small oligoribonucleotides. The chain is Oligoribonuclease from Bordetella bronchiseptica (strain ATCC BAA-588 / NCTC 13252 / RB50) (Alcaligenes bronchisepticus).